The following is a 225-amino-acid chain: Claudin-17 (225 aa).

The Cytoplasmic segment spans residues 1-7; it reads MAFYPLQ. A helical membrane pass occupies residues 8 to 28; it reads IAGLVLGFLGMVGTLATTLLP. The Extracellular portion of the chain corresponds to 29-81; that stretch reads QWRVSAFIGSNIIVFERIWEGLWMNCVRQAKARLQCKFYSSMLALSPALEAAR. A helical membrane pass occupies residues 82–102; the sequence is ALMCVAVALSLIALIIGICGM. The Cytoplasmic segment spans residues 103–124; the sequence is KKIQCTGSNERAKAYLLGTSGV. The chain crosses the membrane as a helical span at residues 125–145; sequence LFILTGIFVLIPVCWTANIII. The Extracellular segment spans residues 146–164; sequence RDFYNPAVHVGQKRELGAA. Residues 165–185 form a helical membrane-spanning segment; it reads LFLGWASVAVLFIAGGLLCGF. Residues 186-225 are Cytoplasmic-facing; the sequence is CCCNRKKQRDGYPAPRPSMPRTDERRRNMTRQSETPTSYV. Positions 194-225 are disordered; it reads RDGYPAPRPSMPRTDERRRNMTRQSETPTSYV. The span at 215-225 shows a compositional bias: polar residues; that stretch reads TRQSETPTSYV.

This sequence belongs to the claudin family. In terms of assembly, does not form homotypic polymeric strands and it is not sufficient to form tight junctions by its own. Interacts with OCLN.

It localises to the cell junction. The protein resides in the tight junction. Its subcellular location is the cell membrane. It catalyses the reaction chloride(in) = chloride(out). It carries out the reaction hydrogencarbonate(in) = hydrogencarbonate(out). The enzyme catalyses bromide(in) = bromide(out). The catalysed reaction is iodide(out) = iodide(in). It catalyses the reaction fluoride(in) = fluoride(out). It carries out the reaction nitrate(in) = nitrate(out). The enzyme catalyses thiocyanate(in) = thiocyanate(out). Channel-forming tight junction protein with selectivity for anions, including chloride and hydrogencarbonate, and for solutes smaller than 9 Angstrom in diameter. In the kidney proximal tubule, may be involved in quantitative reabsorption of filtered anions. Does not affect water permeability. This Sus scrofa (Pig) protein is Claudin-17 (CLDN17).